The following is a 173-amino-acid chain: MEYNTSALCDIYMDQVDVVEPMFSNFGGRASFAGQITTVKCFEDNALIRETLEQDGVGRVLLVDGGGSLRRALLDGELAAIAEENEWEGIVVYGCVREVDELEDMNIGIQALASIPVSAAMQGVGEVDVPVNFGGVTFLPEDYLYADTTGIILSQEPLSADLEEDEEEPELLD.

This sequence belongs to the RraA family. As to quaternary structure, homotrimer. Binds to both RNA-binding sites in the C-terminal region of Rne and to RhlB.

Its subcellular location is the cytoplasm. Globally modulates RNA abundance by binding to RNase E (Rne) and regulating its endonucleolytic activity. Can modulate Rne action in a substrate-dependent manner by altering the composition of the degradosome. Modulates RNA-binding and helicase activities of the degradosome. This Vibrio vulnificus (strain YJ016) protein is Regulator of ribonuclease activity A.